Consider the following 657-residue polypeptide: Glycogen debranching enzyme (657 aa).

Aspartate 336 serves as the catalytic Nucleophile. Glutamate 371 serves as the catalytic Proton donor. A compositionally biased stretch (basic and acidic residues) spans 458 to 467 (NEANGEENRD). Residues 458–479 (NEANGEENRDGTNNNYSNNHGK) form a disordered region.

This sequence belongs to the glycosyl hydrolase 13 family.

The enzyme catalyses Hydrolysis of (1-&gt;6)-alpha-D-glucosidic linkages to branches with degrees of polymerization of three or four glucose residues in limit dextrin.. It participates in glycan degradation; glycogen degradation. Its function is as follows. Removes maltotriose and maltotetraose chains that are attached by 1,6-alpha-linkage to the limit dextrin main chain, generating a debranched limit dextrin. This Escherichia coli (strain K12 / DH10B) protein is Glycogen debranching enzyme.